The following is a 101-amino-acid chain: Small ribosomal subunit protein bS18c (101 aa).

Over residues 1–19 (MDKSKRPFRKSKRSFRRRL) the composition is skewed to basic residues. Disordered regions lie at residues 1 to 23 (MDKSKRPFRKSKRSFRRRLPPIG) and 82 to 101 (KQFERTESTPRTAGPKTRNK).

The protein belongs to the bacterial ribosomal protein bS18 family. As to quaternary structure, part of the 30S ribosomal subunit.

It localises to the plastid. It is found in the chloroplast. This chain is Small ribosomal subunit protein bS18c, found in Drimys granadensis.